Consider the following 351-residue polypeptide: Nuclear inhibitor of protein phosphatase 1 (351 aa).

Residues 1–142 (MAAAANSGSS…LPSAVKGDEK (142 aa)) are interaction with CDC5L, SF3B1 and MELK. The region spanning 49–101 (YLFGRNPDLCDFTIDHQSCSRVHAALVYHKHLKRVFLIDLNSTHGTFLGHIRL) is the FHA domain. Positions 143-224 (MGGEDDELKG…VDPSVGRFRN (82 aa)) are interaction with EED. Position 161 is a phosphothreonine (threonine 161). Residues serine 178 and serine 199 each carry the phosphoserine modification. 2 consecutive short sequence motifs (nuclear localization signal) follow at residues 185 to 209 (GNLD…DDEI) and 210 to 240 (INPE…RVEG). The interval 191–200 (RPKRKRKNSR) is involved in PP-1 inhibition. Residues 200-203 (RVTF) are involved in PP-1 binding. Serine 204 bears the Phosphoserine mark. A Phosphoserine modification is found at serine 249. Tyrosine 264 is modified (phosphotyrosine; by LYN; in vitro). Positions 310 to 329 (AVNMNPAPNPAVYNPEAVNE) are interaction with EED. The segment at 316–351 (APNPAVYNPEAVNEPKKKKYAKEAWPGKKPTPSLLI) is disordered. Positions 330–351 (PKKKKYAKEAWPGKKPTPSLLI) are RNA-binding. The segment at 331–337 (KKKKYAK) is involved in PP-1 inhibition. At tyrosine 335 the chain carries Phosphotyrosine.

As to quaternary structure, interacts with phosphorylated CDC5L, SF3B1 and MELK. Interacts with EED, in a nucleic acid-stimulated manner. Part of a complex consisting of PPP1R8, EED, HDAC2 and PP-1. Part of the spliceosome. Interacts with PPP1CA, PPP1CB and PPP1CC. Requires Mg(2+) as cofactor. May be inactivated by phosphorylation on Ser-199 or Ser-204. Phosphorylated by Lyn in vitro on Tyr-264, and also on Tyr-335 in the presence of RNA. Ubiquitously expressed, with highest levels in heart and skeletal muscle, followed by brain, placenta, lung, liver and pancreas. Less abundant in kidney. The concentration and ratio between isoforms is cell-type dependent. Isoform Alpha (&gt;90%) and isoform Beta were found in brain, heart and kidney. Isoform Gamma is mainly found in B-cells and T-lymphocytes, and has been found in 293 embryonic kidney cells.

The protein resides in the nucleus. The protein localises to the nucleus speckle. It localises to the cytoplasm. Functionally, inhibitor subunit of the major nuclear protein phosphatase-1 (PP-1). It has RNA-binding activity but does not cleave RNA and may target PP-1 to RNA-associated substrates. May also be involved in pre-mRNA splicing. Binds DNA and might act as a transcriptional repressor. Seems to be required for cell proliferation. Isoform Gamma is a site-specific single-strand endoribonuclease that cleaves single strand RNA 3' to purines and pyrimidines in A+U-rich regions. It generates 5'-phosphate termini at the site of cleavage. This isoform does not inhibit PP-1. May be implicated in mRNA splicing. In Homo sapiens (Human), this protein is Nuclear inhibitor of protein phosphatase 1 (PPP1R8).